The sequence spans 254 residues: Cell division protein FtsQ (254 aa).

Residues Met1–Ala27 lie on the Cytoplasmic side of the membrane. A helical membrane pass occupies residues Phe28–Leu48. Over Glu49–Arg254 the chain is Periplasmic. The POTRA domain occupies Lys54–Tyr124.

The protein belongs to the FtsQ/DivIB family. FtsQ subfamily. Part of a complex composed of FtsB, FtsL and FtsQ.

Its subcellular location is the cell inner membrane. Its function is as follows. Essential cell division protein. May link together the upstream cell division proteins, which are predominantly cytoplasmic, with the downstream cell division proteins, which are predominantly periplasmic. May control correct divisome assembly. This chain is Cell division protein FtsQ, found in Haemophilus influenzae (strain ATCC 51907 / DSM 11121 / KW20 / Rd).